Reading from the N-terminus, the 307-residue chain is Membrane protein insertase YidC 2 (307 aa).

A signal peptide spans 1–23 (MKLTLNRILFSGLALSILFTLTG). Residue Cys-24 is the site of N-palmitoyl cysteine attachment. Cys-24 is lipidated: S-diacylglycerol cysteine. 5 consecutive transmembrane segments (helical) span residues 58-78 (LGYG…ILPL), 135-155 (LGGI…AMYF), 179-199 (VLTA…MMAV), 209-225 (TMMY…SFSL), and 231-251 (LYWL…TYLL). Residues 263 to 307 (YAKNPPKAYQSTSSRKDVTPSQNMEQANLPKKIKSNRNAGKQRKR) form a disordered region. Residues 271–288 (YQSTSSRKDVTPSQNMEQ) are compositionally biased toward polar residues. The segment covering 293–307 (KKIKSNRNAGKQRKR) has biased composition (basic residues).

Belongs to the OXA1/ALB3/YidC family. Type 2 subfamily.

The protein resides in the cell membrane. Its function is as follows. Required for the insertion and/or proper folding and/or complex formation of integral membrane proteins into the membrane. Involved in integration of membrane proteins that insert both dependently and independently of the Sec translocase complex, as well as at least some lipoproteins. The sequence is that of Membrane protein insertase YidC 2 from Streptococcus pyogenes serotype M3 (strain ATCC BAA-595 / MGAS315).